Here is a 375-residue protein sequence, read N- to C-terminus: Trichodiene synthase (375 aa).

The protein belongs to the trichodiene synthase family.

The enzyme catalyses (2E,6E)-farnesyl diphosphate = trichodiene + diphosphate. Its pathway is sesquiterpene biosynthesis; trichothecene biosynthesis. TS is a member of the terpene cyclase group of enzymes. It catalyzes the isomerization and cyclization of farnesyl pyro-phosphate to form trichodiene, the first cyclic intermediate in the biosynthetic pathway for trichothecenes. It serves to branch trichothecene biosynthesis from the isoprenoid pathway. The sequence is that of Trichodiene synthase (TRI5) from Fusarium pseudograminearum (Wheat and barley crown-rot fungus).